The primary structure comprises 377 residues: Histidinol-phosphate aminotransferase (377 aa).

An N6-(pyridoxal phosphate)lysine modification is found at lysine 232.

This sequence belongs to the class-II pyridoxal-phosphate-dependent aminotransferase family. Histidinol-phosphate aminotransferase subfamily. In terms of assembly, homodimer. Requires pyridoxal 5'-phosphate as cofactor.

The enzyme catalyses L-histidinol phosphate + 2-oxoglutarate = 3-(imidazol-4-yl)-2-oxopropyl phosphate + L-glutamate. It functions in the pathway amino-acid biosynthesis; L-histidine biosynthesis; L-histidine from 5-phospho-alpha-D-ribose 1-diphosphate: step 7/9. This Mycobacterium sp. (strain JLS) protein is Histidinol-phosphate aminotransferase.